A 258-amino-acid polypeptide reads, in one-letter code: Undecaprenyl-diphosphatase (258 aa).

8 helical membrane passes run 1–21 (MDFL…FLPV), 42–62 (LKCF…FMFF), 69–89 (FNLW…GFLA), 96–116 (FFEP…FIVV), 135–155 (VSFK…IPGT), 173–193 (EVAA…ATAY), 211–231 (IFLV…KLFL), and 237–257 (FSYI…LIYI).

It belongs to the UppP family.

The protein resides in the cell inner membrane. The catalysed reaction is di-trans,octa-cis-undecaprenyl diphosphate + H2O = di-trans,octa-cis-undecaprenyl phosphate + phosphate + H(+). In terms of biological role, catalyzes the dephosphorylation of undecaprenyl diphosphate (UPP). Confers resistance to bacitracin. The sequence is that of Undecaprenyl-diphosphatase from Campylobacter fetus subsp. fetus (strain 82-40).